Consider the following 78-residue polypeptide: Omega-conotoxin-like 12 (78 aa).

Residues 1–22 (MKLTCVVIVAVLLLTACQLITA) form the signal peptide. The propeptide occupies 23-42 (DDSRGTQKHRSLRSTTKVSK). 3 cysteine pairs are disulfide-bonded: Cys-46/Cys-62, Cys-53/Cys-65, and Cys-61/Cys-72.

This sequence belongs to the conotoxin O1 superfamily. Expressed by the venom duct.

The protein localises to the secreted. In terms of biological role, omega-conotoxins act at presynaptic membranes, they bind and block voltage-gated calcium channels (Cav). The chain is Omega-conotoxin-like 12 from Conus striatus (Striated cone).